The primary structure comprises 645 residues: Acetyl-coenzyme A synthetase (645 aa).

CoA is bound by residues 190–193 (RGGR), Thr-309, and Asn-333. ATP is bound by residues 385–387 (GEP), 409–414 (DTWWQT), Asp-498, and Arg-513. CoA is bound at residue Ser-521. Arg-524 provides a ligand contact to ATP. Mg(2+) contacts are provided by Val-535, His-537, and Val-540. Arg-582 is a CoA binding site. Lys-607 carries the N6-acetyllysine modification.

The protein belongs to the ATP-dependent AMP-binding enzyme family. The cofactor is Mg(2+). Acetylated. Deacetylation by the SIR2-homolog deacetylase activates the enzyme.

The enzyme catalyses acetate + ATP + CoA = acetyl-CoA + AMP + diphosphate. In terms of biological role, catalyzes the conversion of acetate into acetyl-CoA (AcCoA), an essential intermediate at the junction of anabolic and catabolic pathways. AcsA undergoes a two-step reaction. In the first half reaction, AcsA combines acetate with ATP to form acetyl-adenylate (AcAMP) intermediate. In the second half reaction, it can then transfer the acetyl group from AcAMP to the sulfhydryl group of CoA, forming the product AcCoA. This Beijerinckia indica subsp. indica (strain ATCC 9039 / DSM 1715 / NCIMB 8712) protein is Acetyl-coenzyme A synthetase.